Consider the following 656-residue polypeptide: Protein EMBRYO SAC DEVELOPMENT ARREST 30 (656 aa).

A helical; Signal-anchor for type II membrane protein transmembrane segment spans residues 9–29 (WIALFVLILSMGSLVVHLSMT). The N-linked (GlcNAc...) asparagine glycan is linked to N119. The disordered stretch occupies residues 381-426 (LSELVGPETPLPENTYKMPPRKSDKQLKEEWNKAGPRPRPLPPPPD). The span at 401 to 412 (RKSDKQLKEEWN) shows a compositional bias: basic and acidic residues. A compositionally biased stretch (pro residues) spans 417–426 (RPRPLPPPPD). N-linked (GlcNAc...) asparagine glycans are attached at residues N444, N522, N534, and N544. The segment at 631-656 (SETEEEFAKSKVASAFDQDEEWDPND) is disordered. Residues 647 to 656 (DQDEEWDPND) are compositionally biased toward acidic residues.

It belongs to the glycosyltransferase GT106 family.

The protein resides in the membrane. It functions in the pathway glycan metabolism. The sequence is that of Protein EMBRYO SAC DEVELOPMENT ARREST 30 from Arabidopsis thaliana (Mouse-ear cress).